The sequence spans 265 residues: Bidirectional sugar transporter SWEET7b (265 aa).

At Met-1–Asn-9 the chain is on the extracellular side. Residues Met-10 to Phe-30 form a helical membrane-spanning segment. In terms of domain architecture, MtN3/slv 1 spans Met-10 to Lys-97. The Cytoplasmic segment spans residues Tyr-31–Asp-45. The chain crosses the membrane as a helical span at residues Pro-46–His-66. Residues Pro-67–Ser-69 are Extracellular-facing. Residues Ile-70–Phe-90 traverse the membrane as a helical segment. Residues Phe-91–Lys-101 are Cytoplasmic-facing. Residues Met-102 to Leu-122 form a helical membrane-spanning segment. Residues Gly-123–Ser-131 lie on the Extracellular side of the membrane. A helical membrane pass occupies residues Leu-132–Ile-152. A MtN3/slv 2 domain is found at Ile-133–Arg-215. The Cytoplasmic portion of the chain corresponds to Met-153–Met-165. Residues Pro-166–Ile-186 traverse the membrane as a helical segment. Topologically, residues Arg-187–Asp-189 are extracellular. A helical transmembrane segment spans residues Ile-190–Tyr-210. Over Ala-211–Leu-265 the chain is Cytoplasmic.

This sequence belongs to the SWEET sugar transporter family. Forms homooligomers and/or heterooligomers.

Its subcellular location is the cell membrane. In terms of biological role, mediates both low-affinity uptake and efflux of sugar across the plasma membrane. This is Bidirectional sugar transporter SWEET7b (SWEET7B) from Oryza sativa subsp. japonica (Rice).